Consider the following 259-residue polypeptide: DNA-directed RNA polymerase 30 kDa polypeptide (259 aa).

The TFIIS-type zinc finger occupies 155-195 (YNTPCPNCKSRNTTPMMIQTRAADEPPLVRHACRDCKQHFK). The Zn(2+) site is built by cysteine 159, cysteine 162, cysteine 187, and cysteine 190. The tract at residues 214–259 (ENKEITEILPDNNPSPPESPEPASPIDDGLIRSTFDRNDEPPEDDE) is disordered. A compositionally biased stretch (pro residues) spans 226–236 (NPSPPESPEPA).

This sequence belongs to the poxviridae DNA-directed RNA polymerase 30 kDa subunit family. As to quaternary structure, the DNA-dependent RNA polymerase (vRNAP) consists of eight subunits encoded by early viral genes and termed according to their apparent molecular masses Rpo147, Rpo132, Rpo35, Rpo30, Rpo22, Rpo19, Rpo18, and Rpo7. The same holoenzyme, with the addition of the transcription-specificity factor RAP94, is used for early gene expression.

Its subcellular location is the virion. The protein resides in the host cytoplasm. It carries out the reaction RNA(n) + a ribonucleoside 5'-triphosphate = RNA(n+1) + diphosphate. In terms of biological role, part of the DNA-dependent RNA polymerase which catalyzes the transcription of viral DNA into RNA using the four ribonucleoside triphosphates as substrates. Responsible for the transcription of early, intermediate and late genes. DNA-dependent RNA polymerase associates with the early transcription factor (ETF), itself composed of OPG118/D6 and OPG134/A8, thereby allowing the early genes transcription. Late transcription, and probably also intermediate transcription, require newly synthesized RNA polymerase. This Homo sapiens (Human) protein is DNA-directed RNA polymerase 30 kDa polypeptide (OPG066).